Consider the following 190-residue polypeptide: Cell division protein SepF (190 aa).

This sequence belongs to the SepF family. In terms of assembly, homodimer. Interacts with FtsZ.

It is found in the cytoplasm. In terms of biological role, cell division protein that is part of the divisome complex and is recruited early to the Z-ring. Probably stimulates Z-ring formation, perhaps through the cross-linking of FtsZ protofilaments. Its function overlaps with FtsA. This is Cell division protein SepF from Synechococcus sp. (strain WH7803).